Reading from the N-terminus, the 395-residue chain is Sensor protein DltS (395 aa).

The next 2 helical transmembrane spans lie at 9 to 29 and 136 to 156; these read FVFL…AVSN and FLIL…SLYL. A Histidine kinase domain is found at 177-387; it reads DASHELKTPI…RLEVQLPIDG (211 aa). Phosphohistidine; by autocatalysis is present on His-180.

The protein localises to the cell membrane. The enzyme catalyses ATP + protein L-histidine = ADP + protein N-phospho-L-histidine.. Its function is as follows. Member of the two-component regulatory system DltS/DltR. Regulates the expression of the dlt operon. Probably phosphorylates DltR. The sequence is that of Sensor protein DltS (dltS) from Streptococcus agalactiae serotype III (strain NEM316).